The following is a 552-amino-acid chain: Protein psiB (552 aa).

A signal peptide spans 1–18 (MKLLSVLITFLLATVIYS). N-linked (GlcNAc...) asparagine glycosylation occurs at Asn-60. The region spanning 114–255 (TYDTTRNIYV…EDYCGVCQGD (142 aa)) is the PA14 domain. 7 N-linked (GlcNAc...) asparagine glycosylation sites follow: Asn-281, Asn-313, Asn-340, Asn-365, Asn-446, Asn-472, and Asn-521.

Belongs to the prespore-cell-inducing factor family.

Its subcellular location is the secreted. In Dictyostelium discoideum (Social amoeba), this protein is Protein psiB (psiB).